The following is a 159-amino-acid chain: Ribosomal RNA large subunit methyltransferase H (159 aa).

S-adenosyl-L-methionine is bound by residues leucine 76, glycine 108, and 127–132; that span reads FGLLTL.

It belongs to the RNA methyltransferase RlmH family. In terms of assembly, homodimer.

The protein localises to the cytoplasm. The catalysed reaction is pseudouridine(1915) in 23S rRNA + S-adenosyl-L-methionine = N(3)-methylpseudouridine(1915) in 23S rRNA + S-adenosyl-L-homocysteine + H(+). Specifically methylates the pseudouridine at position 1915 (m3Psi1915) in 23S rRNA. The chain is Ribosomal RNA large subunit methyltransferase H from Streptococcus mutans serotype c (strain ATCC 700610 / UA159).